We begin with the raw amino-acid sequence, 476 residues long: Inactive glucose-1-phosphate adenylyltransferase small subunit 2, chloroplastic (476 aa).

Residues 1–55 (MQISSSSFITKFTNLHMVRSTSDHHQWRHNYNLKQLFIPNLSVSNSQHLPLNQSV) constitute a chloroplast transit peptide.

Belongs to the bacterial/plant glucose-1-phosphate adenylyltransferase family. Heterotetramer. In terms of tissue distribution, expressed at very low levels in leaves, inflorescences, fruits, and roots.

It is found in the plastid. The protein localises to the chloroplast. The chain is Inactive glucose-1-phosphate adenylyltransferase small subunit 2, chloroplastic from Arabidopsis thaliana (Mouse-ear cress).